Here is an 855-residue protein sequence, read N- to C-terminus: Protein translocase subunit SecA (855 aa).

ATP-binding positions include glutamine 85, 103–107 (GEGKT), and aspartate 492. The interval 794–845 (AAIHEESSSAAAPGPGQNQPGGPGGPSAGPVAPVRNLDKHGRNELCPCGSGK) is disordered. The span at 801–811 (SSAAAPGPGQN) shows a compositional bias: low complexity. Cysteine 839, cysteine 841, cysteine 850, and cysteine 851 together coordinate Zn(2+).

It belongs to the SecA family. In terms of assembly, monomer and homodimer. Part of the essential Sec protein translocation apparatus which comprises SecA, SecYEG and auxiliary proteins SecDF. Other proteins may also be involved. The cofactor is Zn(2+).

It is found in the cell membrane. Its subcellular location is the cytoplasm. It catalyses the reaction ATP + H2O + cellular proteinSide 1 = ADP + phosphate + cellular proteinSide 2.. In terms of biological role, part of the Sec protein translocase complex. Interacts with the SecYEG preprotein conducting channel. Has a central role in coupling the hydrolysis of ATP to the transfer of proteins into and across the cell membrane, serving as an ATP-driven molecular motor driving the stepwise translocation of polypeptide chains across the membrane. This Clostridium beijerinckii (strain ATCC 51743 / NCIMB 8052) (Clostridium acetobutylicum) protein is Protein translocase subunit SecA.